The chain runs to 384 residues: MYQSKKVLLLGSGELGKEVVIEAQRLGVQTVAVDSYEHAPAMQVAHNSYVVDMLDPEQIRTIIEKENPDLIVPEVEAIATDELLKLEEEGFHVIPNARAAKLTMDREGIRRLAAETLGLATAGYEFANTYDEFIQAAAQIGFPCVVKPLMSSSGKGQSVCRSEADLESCWETAMEGGRVKNGRVIVEEFIPFESEITLLTVRAVNGTAFCEPIGHVQKDGDYIESWQPHDMTEQQIEEAKHIAKTITDELGGYGLFGVELFLAKDRVYFSEVSPRPHDTGLVTLVTQNLSEFALHVRAILGFPITEITQLSPGASRPLKAPEELADYTVEGLENALAVPKTQVRVFGKPITKAGRRMAVALSAADSVETARENAKKALDQLILK.

N(1)-(5-phospho-beta-D-ribosyl)glycinamide is bound by residues 14-15 and glutamate 74; that span reads EL. Residues arginine 106, lysine 147, 152–157, 187–190, and glutamate 195 contribute to the ATP site; these read SSGKGQ and EEFI. In terms of domain architecture, ATP-grasp spans 111–300; that stretch reads RLAAETLGLA…EFALHVRAIL (190 aa). Positions 259 and 271 each coordinate Mg(2+). Residues aspartate 278, lysine 348, and 355-356 contribute to the N(1)-(5-phospho-beta-D-ribosyl)glycinamide site; that span reads RR.

It belongs to the PurK/PurT family. In terms of assembly, homodimer.

The enzyme catalyses N(1)-(5-phospho-beta-D-ribosyl)glycinamide + formate + ATP = N(2)-formyl-N(1)-(5-phospho-beta-D-ribosyl)glycinamide + ADP + phosphate + H(+). It participates in purine metabolism; IMP biosynthesis via de novo pathway; N(2)-formyl-N(1)-(5-phospho-D-ribosyl)glycinamide from N(1)-(5-phospho-D-ribosyl)glycinamide (formate route): step 1/1. In terms of biological role, catalyzes two reactions: the first one is the production of beta-formyl glycinamide ribonucleotide (GAR) from formate, ATP and beta GAR; the second, a side reaction, is the production of acetyl phosphate and ADP from acetate and ATP. Involved in the de novo purine biosynthesis. Catalyzes the transfer of formate to 5-phospho-ribosyl-glycinamide (GAR), producing 5-phospho-ribosyl-N-formylglycinamide (FGAR). Formate is provided by PurU via hydrolysis of 10-formyl-tetrahydrofolate. This is Formate-dependent phosphoribosylglycinamide formyltransferase from Bacillus subtilis (strain 168).